The chain runs to 216 residues: GTP cyclohydrolase 1 2 (216 aa).

The protein belongs to the GTP cyclohydrolase I family. Homomer.

It catalyses the reaction GTP + H2O = 7,8-dihydroneopterin 3'-triphosphate + formate + H(+). Its pathway is cofactor biosynthesis; 7,8-dihydroneopterin triphosphate biosynthesis; 7,8-dihydroneopterin triphosphate from GTP: step 1/1. This Nostoc sp. (strain PCC 7120 / SAG 25.82 / UTEX 2576) protein is GTP cyclohydrolase 1 2 (folE2).